The sequence spans 587 residues: Phosphomethylpyrimidine synthase (587 aa).

Residues Asn218, Met247, Tyr276, His312, 332–334, 373–376, and Glu412 each bind substrate; these read SRG and DGLR. Residue His416 coordinates Zn(2+). Tyr439 contacts substrate. Zn(2+) is bound at residue His480. Residues Cys560, Cys563, and Cys568 each contribute to the [4Fe-4S] cluster site.

It belongs to the ThiC family. Requires [4Fe-4S] cluster as cofactor.

It carries out the reaction 5-amino-1-(5-phospho-beta-D-ribosyl)imidazole + S-adenosyl-L-methionine = 4-amino-2-methyl-5-(phosphooxymethyl)pyrimidine + CO + 5'-deoxyadenosine + formate + L-methionine + 3 H(+). The protein operates within cofactor biosynthesis; thiamine diphosphate biosynthesis. Functionally, catalyzes the synthesis of the hydroxymethylpyrimidine phosphate (HMP-P) moiety of thiamine from aminoimidazole ribotide (AIR) in a radical S-adenosyl-L-methionine (SAM)-dependent reaction. This Porphyromonas gingivalis (strain ATCC BAA-308 / W83) protein is Phosphomethylpyrimidine synthase.